The chain runs to 141 residues: ATP synthase epsilon chain (141 aa).

This sequence belongs to the ATPase epsilon chain family. F-type ATPases have 2 components, CF(1) - the catalytic core - and CF(0) - the membrane proton channel. CF(1) has five subunits: alpha(3), beta(3), gamma(1), delta(1), epsilon(1). CF(0) has three main subunits: a, b and c.

The protein localises to the cell inner membrane. Its function is as follows. Produces ATP from ADP in the presence of a proton gradient across the membrane. This is ATP synthase epsilon chain from Burkholderia cenocepacia (strain ATCC BAA-245 / DSM 16553 / LMG 16656 / NCTC 13227 / J2315 / CF5610) (Burkholderia cepacia (strain J2315)).